The following is a 352-amino-acid chain: Nicotinate-nucleotide--dimethylbenzimidazole phosphoribosyltransferase (352 aa).

The active-site Proton acceptor is Glu318.

Belongs to the CobT family.

It catalyses the reaction 5,6-dimethylbenzimidazole + nicotinate beta-D-ribonucleotide = alpha-ribazole 5'-phosphate + nicotinate + H(+). It participates in nucleoside biosynthesis; alpha-ribazole biosynthesis; alpha-ribazole from 5,6-dimethylbenzimidazole: step 1/2. Catalyzes the synthesis of alpha-ribazole-5'-phosphate from nicotinate mononucleotide (NAMN) and 5,6-dimethylbenzimidazole (DMB). This chain is Nicotinate-nucleotide--dimethylbenzimidazole phosphoribosyltransferase, found in Geobacter sulfurreducens (strain ATCC 51573 / DSM 12127 / PCA).